A 445-amino-acid polypeptide reads, in one-letter code: Phosphoglucosamine mutase (445 aa).

Residue Ser-104 is the Phosphoserine intermediate of the active site. Mg(2+)-binding residues include Ser-104, Asp-243, Asp-245, and Asp-247. Ser-104 carries the post-translational modification Phosphoserine.

It belongs to the phosphohexose mutase family. Mg(2+) is required as a cofactor. In terms of processing, activated by phosphorylation.

The enzyme catalyses alpha-D-glucosamine 1-phosphate = D-glucosamine 6-phosphate. In terms of biological role, catalyzes the conversion of glucosamine-6-phosphate to glucosamine-1-phosphate. This Chromobacterium violaceum (strain ATCC 12472 / DSM 30191 / JCM 1249 / CCUG 213 / NBRC 12614 / NCIMB 9131 / NCTC 9757 / MK) protein is Phosphoglucosamine mutase.